Consider the following 31-residue polypeptide: Cyclotide Hyfl-A (31 aa).

The segment at residues 1–31 (SISCGESCVYIPCTVTALVGCTCKDKVCYLN) is a cross-link (cyclopeptide (Ser-Asn)). Cystine bridges form between Cys-4/Cys-21, Cys-8/Cys-23, and Cys-13/Cys-28.

Belongs to the cyclotide family. Bracelet subfamily. Post-translationally, this is a cyclic peptide.

Functionally, probably participates in a plant defense mechanism. The chain is Cyclotide Hyfl-A from Hybanthus floribundus (Greenviolet).